The primary structure comprises 107 residues: U1-lycotoxin-Ls1b (107 aa).

Positions 1-20 are cleaved as a signal peptide; the sequence is MMKVLVVVALLVTLISYSSS. The propeptide occupies 21–41; the sequence is EGIDDLEADELSSLMANEQTR. Intrachain disulfides connect cysteine 44–cysteine 59, cysteine 51–cysteine 68, cysteine 58–cysteine 86, and cysteine 70–cysteine 84.

The protein belongs to the neurotoxin 19 (CSTX) family. 04 (U1-Lctx) subfamily. Expressed by the venom gland.

It localises to the secreted. In Lycosa singoriensis (Wolf spider), this protein is U1-lycotoxin-Ls1b.